A 263-amino-acid polypeptide reads, in one-letter code: Type II restriction enzyme TaqI (263 aa).

Only 15% of purified enzyme (upon expression in E.coli) can be sequenced, suggesting the remainder has a blocked N-terminus.

It carries out the reaction Endonucleolytic cleavage of DNA to give specific double-stranded fragments with terminal 5'-phosphates.. Functionally, a P subtype restriction enzyme that recognizes the double-stranded sequence 5'-TCGA-3' and cleaves after T-1. The chain is Type II restriction enzyme TaqI (taqIR) from Thermus aquaticus.